The following is an 826-amino-acid chain: Glycerol-3-phosphate acyltransferase 1, mitochondrial (826 aa).

Residues 1 to 87 (MDESALTLGT…FFNPSIPSLG (87 aa)) are Cytoplasmic-facing. Residues 80–120 (NPSIPSLGLRNVIYINETHTRHRGWLARRLSYVLFIQERDV) form an important for mitochondrial localization region. The stretch at 88–118 (LRNVIYINETHTRHRGWLARRLSYVLFIQER) is an intramembrane region. Residues 119 to 826 (DVHKGMFATN…LEYILSFVVL (708 aa)) lie on the Cytoplasmic side of the membrane. The HXXXXD motif motif lies at 230–235 (HRSHID). Residues arginine 278, arginine 279, lysine 288, arginine 293, and arginine 328 each coordinate CoA. Position 380 is a phosphoserine (serine 380). Arginine 462 serves as a coordination point for CoA. Residues serine 686 and serine 693 each carry the phosphoserine modification. N6-acetyllysine is present on residues lysine 778 and lysine 782.

This sequence belongs to the GPAT/DAPAT family.

Its subcellular location is the mitochondrion outer membrane. It carries out the reaction sn-glycerol 3-phosphate + an acyl-CoA = a 1-acyl-sn-glycero-3-phosphate + CoA. It catalyses the reaction (9Z,12Z)-octadecadienoyl-CoA + sn-glycerol 3-phosphate = 1-(9Z,12Z)-octadecadienoyl-sn-glycero-3-phosphate + CoA. The enzyme catalyses sn-glycerol 3-phosphate + (9Z)-octadecenoyl-CoA = 1-(9Z-octadecenoyl)-sn-glycero-3-phosphate + CoA. The catalysed reaction is sn-glycerol 3-phosphate + octadecanoyl-CoA = 1-octadecanoyl-sn-glycero-3-phosphate + CoA. It carries out the reaction sn-glycerol 3-phosphate + hexadecanoyl-CoA = 1-hexadecanoyl-sn-glycero-3-phosphate + CoA. It catalyses the reaction dodecanoyl-CoA + sn-glycerol 3-phosphate = 1-dodecanoyl-sn-glycerol 3-phosphate + CoA. The enzyme catalyses 1-acyl-sn-glycero-3-phospho-(1'-sn-glycerol) + an acyl-CoA = a 1,2-diacyl-sn-glycero-3-phospho-(1'-sn-glycerol) + CoA. It participates in phospholipid metabolism; CDP-diacylglycerol biosynthesis; CDP-diacylglycerol from sn-glycerol 3-phosphate: step 1/3. Mitochondrial membrane protein that catalyzes the essential first step of biosynthesis of glycerolipids such as triglycerides, phosphatidic acids and lysophosphatidic acids. Esterifies acyl-group from acyl-coenzyme A (acyl-CoA) to the sn-1 position of glycerol-3-phosphate, to produce lysophosphatidic acid. Has a narrow hydrophobic binding cleft that selects for a linear acyl chain. Catalytic activity is higher for substrates with a 16-carbon acyl chain. The sequence is that of Glycerol-3-phosphate acyltransferase 1, mitochondrial from Sus scrofa (Pig).